A 331-amino-acid chain; its full sequence is Centriolar satellite-associated tubulin polyglutamylase complex regulator 1 (331 aa).

The segment at 1-111 (MLSPERLALP…HCLLQLLCPD (111 aa)) is required for interaction with PCM1. The tract at residues 1–225 (MLSPERLALP…SCPPPALVKE (225 aa)) is required for interaction with TPGS1, LRRC49, and TTLL1. Residues 112–331 (FPLELTQKAA…STEETDESET (220 aa)) are required for interaction with TPGS2. The tract at residues 292–331 (SCLPSRTPPRVGSPWKPLHRSRKLDAESDGSTEETDESET) is disordered. The segment covering 318–331 (ESDGSTEETDESET) has biased composition (acidic residues). S319 is subject to Phosphoserine.

The protein belongs to the CSTPP1 family. In terms of assembly, interacts with PCM1. Interacts with TTLL1, TPGS1, TPGS2 and LRRC49; the interactions link CSTPP1 to the complex TPGC. Binds to alpha-tubulin.

The protein resides in the cytoplasm. It is found in the cytoskeleton. The protein localises to the microtubule organizing center. Its subcellular location is the centrosome. It localises to the centriolar satellite. In terms of biological role, regulator of the tubulin polyglutamylase complex (TPGC) that controls cytoskeletal organization, nuclear shape, and cilium disassembly by balancing microtubule and actin assembly. Regulates the assembly and stability of the TPGC and thereby modulates polyglutamylation of the microtubule, which antagonizes MAP4 binding. This is Centriolar satellite-associated tubulin polyglutamylase complex regulator 1 (Cstpp1) from Rattus norvegicus (Rat).